Here is a 163-residue protein sequence, read N- to C-terminus: Nucleotide-binding protein BLi01194 (163 aa).

The protein belongs to the YajQ family.

Functionally, nucleotide-binding protein. The chain is Nucleotide-binding protein BLi01194 from Bacillus licheniformis (strain ATCC 14580 / DSM 13 / JCM 2505 / CCUG 7422 / NBRC 12200 / NCIMB 9375 / NCTC 10341 / NRRL NRS-1264 / Gibson 46).